We begin with the raw amino-acid sequence, 492 residues long: NADH-quinone oxidoreductase subunit N (492 aa).

14 helical membrane-spanning segments follow: residues isoleucine 18–threonine 38, leucine 45–glutamate 65, leucine 80–leucine 100, phenylalanine 108–valine 128, leucine 133–leucine 153, phenylalanine 167–leucine 187, methionine 209–valine 229, isoleucine 250–isoleucine 270, valine 277–leucine 297, methionine 305–threonine 325, phenylalanine 333–leucine 353, valine 381–phenylalanine 401, asparagine 415–phenylalanine 435, and methionine 464–methionine 484.

Belongs to the complex I subunit 2 family. NDH-1 is composed of 14 different subunits. Subunits NuoA, H, J, K, L, M, N constitute the membrane sector of the complex.

It localises to the cell inner membrane. It carries out the reaction a quinone + NADH + 5 H(+)(in) = a quinol + NAD(+) + 4 H(+)(out). Its function is as follows. NDH-1 shuttles electrons from NADH, via FMN and iron-sulfur (Fe-S) centers, to quinones in the respiratory chain. The immediate electron acceptor for the enzyme in this species is believed to be ubiquinone. Couples the redox reaction to proton translocation (for every two electrons transferred, four hydrogen ions are translocated across the cytoplasmic membrane), and thus conserves the redox energy in a proton gradient. The sequence is that of NADH-quinone oxidoreductase subunit N from Helicobacter acinonychis (strain Sheeba).